Reading from the N-terminus, the 258-residue chain is UPF0246 protein CJA_0191 (258 aa).

It belongs to the UPF0246 family.

The polypeptide is UPF0246 protein CJA_0191 (Cellvibrio japonicus (strain Ueda107) (Pseudomonas fluorescens subsp. cellulosa)).